A 273-amino-acid polypeptide reads, in one-letter code: XIAP-associated factor 1 (273 aa).

The TRAF-type zinc-finger motif lies at 22–80; it reads LHEAHCLRFIVLCPECEEPIPESKMKEHMEVVHQQTKESQQHPAKCKFCELAVQLSNLD. A disordered region spans residues 181 to 228; that stretch reads GNRRSTVSKDVRPKTKNRNSSTKRETKKQNGTVALPLKSGLQQRADLP.

In terms of assembly, interacts with BIRC1, BIRC2, BIRC3, BIRC4, BIRC7 and BIRC8. Part of an complex consisting of BIRC4, XAF1 and BIRC5; the complex formation requires IFN-beta stimulation. Interacts with RNF114, the interaction increases XAF1 stability and proapoptotic effects, and may regulate IFN signaling.

Its subcellular location is the cytoplasm. The protein resides in the nucleus. The protein localises to the mitochondrion. In terms of biological role, seems to function as a negative regulator of members of the IAP (inhibitor of apoptosis protein) family. Inhibits anti-caspase activity of BIRC4. Induces cleavage and inactivation of BIRC4 independent of caspase activation. Mediates TNF-alpha-induced apoptosis and is involved in apoptosis in trophoblast cells. May inhibit BIRC4 indirectly by activating the mitochondrial apoptosis pathway. After translocation to mitochondria, promotes translocation of BAX to mitochondria and cytochrome c release from mitochondria. Seems to promote the redistribution of BIRC4 from the cytoplasm to the nucleus, probably independent of BIRC4 inactivation which seems to occur in the cytoplasm. The BIRC4-XAF1 complex mediates down-regulation of BIRC5/survivin; the process requires the E3 ligase activity of BIRC4. Seems to be involved in cellular sensitivity to the proapoptotic actions of TRAIL. May be a tumor suppressor by mediating apoptosis resistance of cancer cells. The chain is XIAP-associated factor 1 (Xaf1) from Mus musculus (Mouse).